We begin with the raw amino-acid sequence, 397 residues long: MRRNTQDENMRKWFKVTIPYGIKYDKAWLMNSIQSNCSVPFTPVDFHYIRNRACFFVQVASAASALKDVSYKIYDDENQKICIFVSHFTAPYSVKNKLKPGQMEMLKLTMNKRYNVSQQALDLQNLRFDPDLMGRDIDIILNRRNCMAATLKITERNFPELLSLNLCNNKLYQLDGLSDITEKAPKVKTLNLSKNKLESAWELGKVKGLKLEELWLEGNPLCSTFSDQSAYVSAIRDCFPKLLRLDGRELSAPVIVDIDSSETMKPCKENFTGSETLKHLVLQFLQQSNLCKYFKDSRNIKILKDPYLQRKLLKHTKCPRNVDSLSALPETQHDFTSILVDMWYQTVNTCFLPRAGPESQRWWCLLSLKWKDGLRVLILPSCGPSSLPLAAIPVCAS.

Residues 13-92 form the RRM domain; the sequence is WFKVTIPYGI…IFVSHFTAPY (80 aa). LRR repeat units lie at residues 160 to 185, 186 to 209, 210 to 237, and 238 to 265; these read ELLSLNLCNNKLYQLDGLSDITEKAP, KVKTLNLSKNKLESAWELGKVKGL, KLEELWLEGNPLCSTFSDQSAYVSAIRD, and CFPKLLRLDGRELSAPVIVDIDSSETMK. An NTF2; truncated domain is found at 280–367; that stretch reads LVLQFLQQSN…ESQRWWCLLS (88 aa).

Belongs to the NXF family. In terms of assembly, interacts with NXT1 and NXT2.

It is found in the cytoplasm. The protein resides in the nucleus. In terms of biological role, could be involved in the export of mRNA from the nucleus to the cytoplasm. Could also have a role in polarized cytoplasmic transport and localization of mRNA in neurons. The polypeptide is Nuclear RNA export factor 5 (NXF5) (Homo sapiens (Human)).